The following is a 317-amino-acid chain: UV DNA damage endonuclease (317 aa).

Belongs to the uve1/UvsE family.

Functionally, component in a DNA repair pathway. Removal of UV LIGHT damaged nucleotides. Recognizes pyrimidine dimers and cleave a phosphodiester bond immediately 5' to the lesion. The protein is UV DNA damage endonuclease of Bacillus cereus (strain 03BB102).